The sequence spans 348 residues: Uroporphyrinogen decarboxylase (348 aa).

Residues 28 to 32 (RQAGR), Asp78, Tyr154, Thr209, and His325 each bind substrate.

The protein belongs to the uroporphyrinogen decarboxylase family. Homodimer.

Its subcellular location is the cytoplasm. It carries out the reaction uroporphyrinogen III + 4 H(+) = coproporphyrinogen III + 4 CO2. The protein operates within porphyrin-containing compound metabolism; protoporphyrin-IX biosynthesis; coproporphyrinogen-III from 5-aminolevulinate: step 4/4. Functionally, catalyzes the decarboxylation of four acetate groups of uroporphyrinogen-III to yield coproporphyrinogen-III. In Rhodopseudomonas palustris (strain BisA53), this protein is Uroporphyrinogen decarboxylase.